The chain runs to 181 residues: Nucleoside diphosphate kinase, mitochondrial (181 aa).

Over residues M1–R10 the composition is skewed to basic residues. The segment at M1 to R22 is disordered. The transit peptide at M1 to Y24 directs the protein to the mitochondrion. ATP is bound by residues K40, F88, R116, T122, R133, and N143. The active-site Pros-phosphohistidine intermediate is H146.

Belongs to the NDK family. It depends on Mg(2+) as a cofactor. As to expression, highest levels in the liver and kidney with lower levels in the heart, brain and breast muscle.

Its subcellular location is the mitochondrion intermembrane space. The protein resides in the mitochondrion matrix. It catalyses the reaction a 2'-deoxyribonucleoside 5'-diphosphate + ATP = a 2'-deoxyribonucleoside 5'-triphosphate + ADP. It carries out the reaction a ribonucleoside 5'-diphosphate + ATP = a ribonucleoside 5'-triphosphate + ADP. Its activity is regulated as follows. Feedback inhibition by ADP. Major role in the synthesis of nucleoside triphosphates other than ATP. The ATP gamma phosphate is transferred to the NDP beta phosphate via a ping-pong mechanism, using a phosphorylated active-site intermediate. Through the catalyzed exchange of gamma-phosphate between di- and triphosphonucleosides participates in regulation of intracellular nucleotide homeostasis. Binds to anionic phospholipids, predominantly to cardiolipin; the binding inhibits its phosphotransfer activity. Acts as a mitochondria-specific NDK coupled to respiration. Promotes the redistribution of cardiolipin between the mitochondrial inner membrane and outer membrane which is implicated in pro-apoptotic signaling. This is Nucleoside diphosphate kinase, mitochondrial (NME4) from Columba livia (Rock dove).